Reading from the N-terminus, the 336-residue chain is Gastrula zinc finger protein XlCGF57.1 (336 aa).

C2H2-type zinc fingers lie at residues 6 to 28 (YTCT…MKIH), 34 to 56 (FICT…MKTH), 62 to 84 (FTCT…LTIH), 90 to 112 (FSCT…MKTH), 118 to 140 (FTCT…MKTH), 146 to 168 (FTCT…LKIH), 174 to 196 (FTCT…LKIH), 202 to 224 (FTCT…MKIH), 230 to 252 (FSCT…LTMH), 258 to 280 (FTCT…TKIH), and 286 to 308 (FSCT…LKIH).

The protein belongs to the krueppel C2H2-type zinc-finger protein family.

The protein localises to the nucleus. Functionally, may be involved in transcriptional regulation. In Xenopus laevis (African clawed frog), this protein is Gastrula zinc finger protein XlCGF57.1.